Consider the following 76-residue polypeptide: Large ribosomal subunit protein uL29 (76 aa).

Belongs to the universal ribosomal protein uL29 family.

The sequence is that of Large ribosomal subunit protein uL29 from Corynebacterium aurimucosum (strain ATCC 700975 / DSM 44827 / CIP 107346 / CN-1) (Corynebacterium nigricans).